Here is a 187-residue protein sequence, read N- to C-terminus: Putative manganese efflux pump MntP (187 aa).

6 consecutive transmembrane segments (helical) span residues 3–23 (LSAT…ASIG), 41–61 (LIFG…GLLA), 62–82 (TQFV…FLGG), 106–128 (LLVT…LAFL), 142–162 (ATLI…PLLG), and 167–187 (ILGG…HFAG).

The protein belongs to the MntP (TC 9.B.29) family.

It localises to the cell inner membrane. Functionally, probably functions as a manganese efflux pump. This is Putative manganese efflux pump MntP from Cronobacter sakazakii (strain ATCC BAA-894) (Enterobacter sakazakii).